A 306-amino-acid chain; its full sequence is Agmatinase (306 aa).

Mn(2+) is bound by residues histidine 126, aspartate 149, histidine 151, aspartate 153, aspartate 230, and aspartate 232.

It belongs to the arginase family. Agmatinase subfamily. Requires Mn(2+) as cofactor.

The enzyme catalyses agmatine + H2O = urea + putrescine. Its pathway is amine and polyamine biosynthesis; putrescine biosynthesis via agmatine pathway; putrescine from agmatine: step 1/1. In terms of biological role, catalyzes the formation of putrescine from agmatine. This Salmonella dublin (strain CT_02021853) protein is Agmatinase.